Here is an 867-residue protein sequence, read N- to C-terminus: Protein translocase subunit SecA (867 aa).

ATP contacts are provided by residues Gln-86, 104–108, and Asp-499; that span reads GEGKT. Zn(2+) is bound by residues Cys-848, Cys-850, Cys-859, and His-860.

It belongs to the SecA family. As to quaternary structure, monomer and homodimer. Part of the essential Sec protein translocation apparatus which comprises SecA, SecYEG and auxiliary proteins SecDF-YajC and YidC. Zn(2+) serves as cofactor.

Its subcellular location is the cell membrane. It localises to the cytoplasm. It catalyses the reaction ATP + H2O + cellular proteinSide 1 = ADP + phosphate + cellular proteinSide 2.. Its function is as follows. Part of the Sec protein translocase complex. Interacts with the SecYEG preprotein conducting channel. Has a central role in coupling the hydrolysis of ATP to the transfer of proteins into and across the cell membrane, serving both as a receptor for the preprotein-SecB complex and as an ATP-driven molecular motor driving the stepwise translocation of polypeptide chains across the membrane. This chain is Protein translocase subunit SecA, found in Wolbachia sp. subsp. Brugia malayi (strain TRS).